The following is a 364-amino-acid chain: MSAPLANDTFLRALRRQPTEYTPLWLMRQAGRYLPEYNATRARAGSFLGLAKSPAYATEVTLQPLDRYPLDAAILFSDILTVPDAMGLGLSFEQGEGPRFARPVRSEADVAALSVPDMASLQYVFDAVSEIRRALVQDGRQRVPLIGFSGSPWTLACYMVEGGGSDDFRTVKSMLYARPDLMHRILEINAAAVIDYLNAQIDAGAQAVMVFDTWGGALADGIYQTFSLAYMARVVEGLRAGADGQRVPVILFTKGGGLWLESMAQTGADALGVDWTVNLQLARVRTGGRVALQGNLDPTVLFAEPDAIRAQVRRVLEDYAAGGDSDGHVFNLGHGISQFTPPESVAVLVDEVHTFSRALRTRLP.

Substrate-binding positions include 28-32 (RQAGR), F47, D78, Y158, T213, and H334.

The protein belongs to the uroporphyrinogen decarboxylase family. As to quaternary structure, homodimer.

It localises to the cytoplasm. It catalyses the reaction uroporphyrinogen III + 4 H(+) = coproporphyrinogen III + 4 CO2. It functions in the pathway porphyrin-containing compound metabolism; protoporphyrin-IX biosynthesis; coproporphyrinogen-III from 5-aminolevulinate: step 4/4. Functionally, catalyzes the decarboxylation of four acetate groups of uroporphyrinogen-III to yield coproporphyrinogen-III. The polypeptide is Uroporphyrinogen decarboxylase (Ralstonia nicotianae (strain ATCC BAA-1114 / GMI1000) (Ralstonia solanacearum)).